A 647-amino-acid polypeptide reads, in one-letter code: Versicolorin B synthase (647 aa).

Residues 1–26 form the signal peptide; sequence MALSTILTAAAMPVAGLFAFAQQSSA. Residues 85 to 86 and 106 to 107 contribute to the FAD site; these read TA and EA. Residue Asn-117 is glycosylated (N-linked (GlcNAc...) asparagine). An FAD-binding site is contributed by 172–175; sequence GAML. Residues Asn-222 and Asn-509 are each glycosylated (N-linked (GlcNAc...) asparagine). Residues Ala-617 and 628 to 629 contribute to the FAD site; that span reads PM.

The protein belongs to the GMC oxidoreductase family. As to quaternary structure, homodimer. The cofactor is FAD.

The protein localises to the cytoplasm. Its subcellular location is the cytosol. The catalysed reaction is (2S-3S)-versiconal hemiacetal = versicolorin B + H2O. It carries out the reaction (S)-5'-oxoaverantin + H(+) = (1'S,5'S)-averufin + H2O. It functions in the pathway mycotoxin biosynthesis. Versicolorin B synthase; part of the fragmented gene cluster that mediates the biosynthesis of dothistromin (DOTH), a polyketide toxin very similar in structure to the aflatoxin precursor, versicolorin B. The first step of the pathway is the conversion of acetate to norsolorinic acid (NOR) and requires the fatty acid synthase subunits hexA and hexB, as well as the polyketide synthase pksA. PksA combines a hexanoyl starter unit and 7 malonyl-CoA extender units to synthesize the precursor NOR. The hexanoyl starter unit is provided to the acyl-carrier protein (ACP) domain by the fungal fatty acid synthase hexA/hexB. The second step is the conversion of NOR to averantin (AVN) and requires the norsolorinic acid ketoreductase nor1, which catalyzes the dehydration of norsolorinic acid to form (1'S)-averantin. The cytochrome P450 monooxygenase avnA then catalyzes the hydroxylation of AVN to 5'hydroxyaverantin (HAVN). The next step is performed by adhA that transforms HAVN to averufin (AVF). Averufin might then be converted to hydroxyversicolorone by cypX and avfA. Hydroxyversicolorone is further converted versiconal hemiacetal acetate (VHA) by moxY. VHA is then the substrate for the versiconal hemiacetal acetate esterase est1 to yield versiconal (VAL). Versicolorin B synthase vbsA then converts VAL to versicolorin B (VERB) by closing the bisfuran ring. Then, the activity of the versicolorin B desaturase verB leads to versicolorin A (VERA). DotB, a predicted chloroperoxidase, may perform epoxidation of the A-ring of VERA. Alternatively, a cytochrome P450, such as cypX or avnA could catalyze this step. It is also possible that another, uncharacterized, cytochrome P450 enzyme is responsible for this step. Opening of the epoxide could potentially be achieved by the epoxide hydrolase epoA. However, epoA seems not to be required for DOTH biosynthesis, but other epoxide hydrolases may have the ability to complement this hydrolysis. Alternatively, opening of the epoxide ring could be achieved non-enzymatically. The next step is the deoxygenation of ring A to yield the 5,8-dihydroxyanthraquinone which is most likely catalyzed by the NADPH dehydrogenase encoded by ver1. The last stages of DOTH biosynthesis are proposed to involve hydroxylation of the bisfuran. OrdB and norB might have oxidative roles here. An alternative possibility is that cytochrome P450 monoogenases such as avnA and cypX might perform these steps in addition to previously proposed steps. The chain is Versicolorin B synthase from Dothistroma septosporum (Red band needle blight fungus).